Consider the following 399-residue polypeptide: Elongation factor Tu (399 aa).

Residues 10–207 (KPHVNVGTIG…ALDSYIPEPV (198 aa)) form the tr-type G domain. Residues 19–26 (GHIDHGKT) form a G1 region. Residue 19–26 (GHIDHGKT) participates in GTP binding. Thr-26 lines the Mg(2+) pocket. The G2 stretch occupies residues 60–64 (GITIN). The tract at residues 81 to 84 (DCPG) is G3. Residues 81 to 85 (DCPGH) and 136 to 139 (NKVD) contribute to the GTP site. Residues 136-139 (NKVD) form a G4 region. The segment at 174 to 176 (SAL) is G5.

Belongs to the TRAFAC class translation factor GTPase superfamily. Classic translation factor GTPase family. EF-Tu/EF-1A subfamily. Monomer.

It is found in the cytoplasm. It catalyses the reaction GTP + H2O = GDP + phosphate + H(+). GTP hydrolase that promotes the GTP-dependent binding of aminoacyl-tRNA to the A-site of ribosomes during protein biosynthesis. The protein is Elongation factor Tu of Pseudothermotoga lettingae (strain ATCC BAA-301 / DSM 14385 / NBRC 107922 / TMO) (Thermotoga lettingae).